The primary structure comprises 447 residues: Probable glycine dehydrogenase (decarboxylating) subunit 1 (447 aa).

It belongs to the GcvP family. N-terminal subunit subfamily. As to quaternary structure, the glycine cleavage system is composed of four proteins: P, T, L and H. In this organism, the P 'protein' is a heterodimer of two subunits.

The catalysed reaction is N(6)-[(R)-lipoyl]-L-lysyl-[glycine-cleavage complex H protein] + glycine + H(+) = N(6)-[(R)-S(8)-aminomethyldihydrolipoyl]-L-lysyl-[glycine-cleavage complex H protein] + CO2. The glycine cleavage system catalyzes the degradation of glycine. The P protein binds the alpha-amino group of glycine through its pyridoxal phosphate cofactor; CO(2) is released and the remaining methylamine moiety is then transferred to the lipoamide cofactor of the H protein. The polypeptide is Probable glycine dehydrogenase (decarboxylating) subunit 1 (Halalkalibacterium halodurans (strain ATCC BAA-125 / DSM 18197 / FERM 7344 / JCM 9153 / C-125) (Bacillus halodurans)).